The chain runs to 275 residues: Dolichyl-diphosphooligosaccharide--protein glycosyltransferase subunit delta (275 aa).

A signal peptide spans 1 to 18 (MKTSVFIAIFNLLVCALA). 3 helical membrane-spanning segments follow: residues 179 to 199 (VFIIAAFTLLLGLFGSWVGFI), 214 to 234 (VQLLHNVSFLISVLGFELNFV), and 241 to 261 (SIFTTLFYGFILSIPCVYFGV).

Belongs to the SWP1 family. Component of the oligosaccharyltransferase (OST) complex.

The protein localises to the endoplasmic reticulum membrane. The protein operates within protein modification; protein glycosylation. In terms of biological role, subunit of the oligosaccharyl transferase (OST) complex that catalyzes the initial transfer of a defined glycan (Glc(3)Man(9)GlcNAc(2) in eukaryotes) from the lipid carrier dolichol-pyrophosphate to an asparagine residue within an Asn-X-Ser/Thr consensus motif in nascent polypeptide chains, the first step in protein N-glycosylation. N-glycosylation occurs cotranslationally and the complex associates with the Sec61 complex at the channel-forming translocon complex that mediates protein translocation across the endoplasmic reticulum (ER). All subunits are required for a maximal enzyme activity. Plays a role in cell wall integrity and in engulfment by macrophages. The chain is Dolichyl-diphosphooligosaccharide--protein glycosyltransferase subunit delta from Candida albicans (strain SC5314 / ATCC MYA-2876) (Yeast).